Reading from the N-terminus, the 1703-residue chain is Protein TIC 214 (1703 aa).

6 helical membrane-spanning segments follow: residues 39–61, 67–87, 90–110, 138–158, 174–194, and 220–240; these read YYGF…TFFL, GIIC…SIYC, LYVM…YMFY, LLLD…NPVL, FFLT…INSI, and FSIL…VPLI. Disordered regions lie at residues 615–643 and 1431–1494; these read GPRK…KERE and TKEP…WKSK. The stretch at 618 to 660 forms a coiled coil; sequence KGKLEDKEKEKEKAAQTQTEVKKEREKEKEERVIKRFQNQSDF. Residues 619 to 643 show a composition bias toward basic and acidic residues; the sequence is GKLEDKEKEKEKAAQTQTEVKKERE.

This sequence belongs to the TIC214 family. As to quaternary structure, part of the Tic complex.

Its subcellular location is the plastid. It localises to the chloroplast inner membrane. In terms of biological role, involved in protein precursor import into chloroplasts. May be part of an intermediate translocation complex acting as a protein-conducting channel at the inner envelope. The sequence is that of Protein TIC 214 from Psilotum nudum (Whisk fern).